The chain runs to 153 residues: Large ribosomal subunit protein uL15 (153 aa).

Residues 1 to 40 (MTDKKRRQRGSRTHGGGTHKNRRGAGNRGGRGRAGRKKHE) show a composition bias toward basic residues. The tract at residues 1 to 60 (MTDKKRRQRGSRTHGGGTHKNRRGAGNRGGRGRAGRKKHEQHNYEDVGKSGFKRPEKTDR) is disordered. Residues 41–60 (QHNYEDVGKSGFKRPEKTDR) are compositionally biased toward basic and acidic residues.

Belongs to the universal ribosomal protein uL15 family. As to quaternary structure, part of the 50S ribosomal subunit.

In terms of biological role, binds to the 23S rRNA. The protein is Large ribosomal subunit protein uL15 of Halobacterium salinarum (strain ATCC 29341 / DSM 671 / R1).